A 247-amino-acid polypeptide reads, in one-letter code: Cell division protein ZapD (247 aa).

Belongs to the ZapD family. Interacts with FtsZ.

Its subcellular location is the cytoplasm. In terms of biological role, cell division factor that enhances FtsZ-ring assembly. Directly interacts with FtsZ and promotes bundling of FtsZ protofilaments, with a reduction in FtsZ GTPase activity. This Klebsiella pneumoniae (strain 342) protein is Cell division protein ZapD.